A 164-amino-acid polypeptide reads, in one-letter code: ATP synthase subunit b 1 (164 aa).

A helical membrane pass occupies residues 8 to 28 (PETWVAIAFVILMGLFAYLGV).

It belongs to the ATPase B chain family. F-type ATPases have 2 components, F(1) - the catalytic core - and F(0) - the membrane proton channel. F(1) has five subunits: alpha(3), beta(3), gamma(1), delta(1), epsilon(1). F(0) has three main subunits: a(1), b(2) and c(10-14). The alpha and beta chains form an alternating ring which encloses part of the gamma chain. F(1) is attached to F(0) by a central stalk formed by the gamma and epsilon chains, while a peripheral stalk is formed by the delta and b chains.

Its subcellular location is the cell inner membrane. Its function is as follows. F(1)F(0) ATP synthase produces ATP from ADP in the presence of a proton or sodium gradient. F-type ATPases consist of two structural domains, F(1) containing the extramembraneous catalytic core and F(0) containing the membrane proton channel, linked together by a central stalk and a peripheral stalk. During catalysis, ATP synthesis in the catalytic domain of F(1) is coupled via a rotary mechanism of the central stalk subunits to proton translocation. Component of the F(0) channel, it forms part of the peripheral stalk, linking F(1) to F(0). The protein is ATP synthase subunit b 1 of Bradyrhizobium sp. (strain ORS 278).